We begin with the raw amino-acid sequence, 938 residues long: Phosphoenolpyruvate carboxylase (938 aa).

Residues histidine 151 and lysine 591 contribute to the active site.

Belongs to the PEPCase type 1 family. Mg(2+) is required as a cofactor.

The enzyme catalyses oxaloacetate + phosphate = phosphoenolpyruvate + hydrogencarbonate. Its function is as follows. Forms oxaloacetate, a four-carbon dicarboxylic acid source for the tricarboxylic acid cycle. In Roseiflexus castenholzii (strain DSM 13941 / HLO8), this protein is Phosphoenolpyruvate carboxylase.